The sequence spans 359 residues: Tyrosine-protein phosphatase non-receptor type 7 (359 aa).

A disordered region spans residues 1 to 34 (MVQACEGRSRAQLPTLSLGADMTQPPPAKAPAKK). The segment at 38 to 51 (LQERRGSSVALMLD) is interaction with MAP kinases. At Ser44 the chain carries Phosphoserine. Thr66 carries the phosphothreonine modification. Ser93 and Ser143 each carry phosphoserine. One can recognise a Tyrosine-protein phosphatase domain in the interval 97–349 (LEEEFLKIPS…QFLHHTLALY (253 aa)). Substrate-binding positions include Asp257, 290–296 (CSAGIGR), and Gln334. The active-site Phosphocysteine intermediate is Cys290. Cys290 carries the cysteine sulfenic acid (-SOH) modification.

Belongs to the protein-tyrosine phosphatase family. Non-receptor class subfamily. Oxidized at active site cysteine. Treatment with pervanadate (vanadate and H(2)O(2)) or with antigen enhanced oxidation of active site cysteine.

It localises to the cytoplasm. The protein resides in the cytoskeleton. It catalyses the reaction O-phospho-L-tyrosyl-[protein] + H2O = L-tyrosyl-[protein] + phosphate. With respect to regulation, inhibited in cells after FCER1A triggering. Its function is as follows. May play a role in the regulation of T and B-lymphocyte development and signal transduction. The protein is Tyrosine-protein phosphatase non-receptor type 7 (Ptpn7) of Rattus norvegicus (Rat).